The primary structure comprises 360 residues: F-box protein SKP2A (360 aa).

The F-box domain occupies 25 to 71 (IKEWKDIPVELLMRILSLVDDRNVIVASGVCTGWRDAISFGLTRLRL). Residues 127–128 (SL), 149–152 (NLSG), 175–178 (NLCG), and asparagine 202 each bind (indol-3-yl)acetate.

As to quaternary structure, part of a SCF (ASK-cullin-F-box) protein ligase complex. Interacts with CUL1 (RUB1-modified and non-modified isoforms), SKP1A, SKP1B and ASK18. Recruit DPB and phosphorylated E2FC. Interacts with auxin. Auxin controls the interaction with DPB. Post-translationally, polyubiquitinated and subsequently targeted to proteasome. Auxin promotes this ubiquitination-mediated degradation. Expressed in embryo, seedlings, hypocotyl, roots, leaves and flowers.

The protein resides in the nucleus. The protein operates within protein modification; protein ubiquitination. Its function is as follows. Component of SCF(SKP2A) E3 ubiquitin ligase complexes, which mediate the ubiquitination and subsequent proteasomal degradation of target proteins (including cell cycle repressors). Acts as an auxin receptor; one active auxin is indole-3-acetate. Regulates the stability of the transcription factors E2FC and DPB, repressors of cell proliferation. Confers increase tolerance to osmotic stress by promoting cell division, especially in meristems. Promotes the formation of lateral root primordia. In Arabidopsis thaliana (Mouse-ear cress), this protein is F-box protein SKP2A (SKP2A).